Here is a 71-residue protein sequence, read N- to C-terminus: Cytochrome c oxidase subunit 7, mitochondrial (71 aa).

Topologically, residues 1–35 are mitochondrial matrix; that stretch reads MPGLVNAPNHVPEKQRYYQQAFKNHTRLWKIGPRS. A helical transmembrane segment spans residues 36–58; that stretch reads GIIMTTFNIAMWGTFGASMYAMS. The Mitochondrial intermembrane portion of the chain corresponds to 59–71; sequence RKVLGYNTWFSED.

This sequence belongs to the cytochrome c oxidase VIIa family. As to quaternary structure, component of the cytochrome c oxidase (complex IV, CIV), a multisubunit enzyme composed of 11 subunits. The complex is composed of a catalytic core of 3 subunits Cox1, Cox2 and Cox3, encoded in the mitochondrial DNA, and 8 supernumerary subunits Cox4, Cox5a/Cox5, Cox6, Cox7, Cox8, Cox7a/Cox9, Cox6b/Cox12 and Cox6a/Cox13, which are encoded in the nuclear genome. The complex exists as a monomer or a dimer and forms respiratory supercomplexes (SCs) in the inner mitochondrial membrane with NADH-ubiquinone oxidoreductase (complex I, CI) and ubiquinol-cytochrome c oxidoreductase (cytochrome b-c1 complex, complex III, CIII), resulting in various different assemblies (supercomplexes I(1)IV(1), I(1)III(3)IV(2), III(2)IV(1) and III(2)IV(2) as well as larger supercomplexes of compositions like I(1)III(2)IV(5-6)).

The protein resides in the mitochondrion inner membrane. It functions in the pathway energy metabolism; oxidative phosphorylation. In terms of biological role, component of the cytochrome c oxidase, the last enzyme in the mitochondrial electron transport chain which drives oxidative phosphorylation. The respiratory chain contains 3 multisubunit complexes succinate dehydrogenase (complex II, CII), ubiquinol-cytochrome c oxidoreductase (cytochrome b-c1 complex, complex III, CIII) and cytochrome c oxidase (complex IV, CIV), that cooperate to transfer electrons derived from NADH and succinate to molecular oxygen, creating an electrochemical gradient over the inner membrane that drives transmembrane transport and the ATP synthase. Cytochrome c oxidase is the component of the respiratory chain that catalyzes the reduction of oxygen to water. Electrons originating from reduced cytochrome c in the intermembrane space (IMS) are transferred via the dinuclear copper A center (CU(A)) of Cox2 and heme A of Cox1 to the active site in Cox1, a binuclear center (BNC) formed by heme A3 and copper B (CU(B)). The BNC reduces molecular oxygen to 2 water molecules using 4 electrons from cytochrome c in the IMS and 4 protons from the mitochondrial matrix. The protein is Cytochrome c oxidase subunit 7, mitochondrial of Neurospora crassa (strain ATCC 24698 / 74-OR23-1A / CBS 708.71 / DSM 1257 / FGSC 987).